A 359-amino-acid chain; its full sequence is Probable dual-specificity RNA methyltransferase RlmN (359 aa).

Glu-91 functions as the Proton acceptor in the catalytic mechanism. In terms of domain architecture, Radical SAM core spans 97 to 329 (QHYGHSVCVT…KKNGVNCVVR (233 aa)). A disulfide bridge links Cys-104 with Cys-340. Cys-111, Cys-115, and Cys-118 together coordinate [4Fe-4S] cluster. Residues 163 to 164 (GE), Ser-195, 218 to 220 (SLH), and Asn-296 each bind S-adenosyl-L-methionine. Cys-340 acts as the S-methylcysteine intermediate in catalysis.

The protein belongs to the radical SAM superfamily. RlmN family. The cofactor is [4Fe-4S] cluster.

The protein resides in the cytoplasm. The catalysed reaction is adenosine(2503) in 23S rRNA + 2 reduced [2Fe-2S]-[ferredoxin] + 2 S-adenosyl-L-methionine = 2-methyladenosine(2503) in 23S rRNA + 5'-deoxyadenosine + L-methionine + 2 oxidized [2Fe-2S]-[ferredoxin] + S-adenosyl-L-homocysteine. The enzyme catalyses adenosine(37) in tRNA + 2 reduced [2Fe-2S]-[ferredoxin] + 2 S-adenosyl-L-methionine = 2-methyladenosine(37) in tRNA + 5'-deoxyadenosine + L-methionine + 2 oxidized [2Fe-2S]-[ferredoxin] + S-adenosyl-L-homocysteine. Its function is as follows. Specifically methylates position 2 of adenine 2503 in 23S rRNA and position 2 of adenine 37 in tRNAs. This is Probable dual-specificity RNA methyltransferase RlmN from Streptococcus pyogenes serotype M5 (strain Manfredo).